The following is a 434-amino-acid chain: Eukaryotic translation initiation factor 3 subunit E (434 aa).

Residues 219–392 (FFNHPKGRDL…GHVVMGTQPL (174 aa)) enclose the PCI domain.

It belongs to the eIF-3 subunit E family. As to quaternary structure, component of the eukaryotic translation initiation factor 3 (eIF-3) complex. The eIF-3 complex interacts with pix. Interacts with mxt.

It is found in the cytoplasm. In terms of biological role, component of the eukaryotic translation initiation factor 3 (eIF-3) complex, which is involved in protein synthesis of a specialized repertoire of mRNAs and, together with other initiation factors, stimulates binding of mRNA and methionyl-tRNAi to the 40S ribosome. The eIF-3 complex specifically targets and initiates translation of a subset of mRNAs involved in cell proliferation. This Drosophila ananassae (Fruit fly) protein is Eukaryotic translation initiation factor 3 subunit E (eIF3-S6).